The sequence spans 412 residues: Serine hydroxymethyltransferase (412 aa).

(6S)-5,6,7,8-tetrahydrofolate-binding positions include Leu-117 and 121 to 123 (GHL). Lys-226 bears the N6-(pyridoxal phosphate)lysine mark. (6S)-5,6,7,8-tetrahydrofolate-binding positions include Glu-242 and 350-352 (SPF).

This sequence belongs to the SHMT family. Homodimer. It depends on pyridoxal 5'-phosphate as a cofactor.

It localises to the cytoplasm. The enzyme catalyses (6R)-5,10-methylene-5,6,7,8-tetrahydrofolate + glycine + H2O = (6S)-5,6,7,8-tetrahydrofolate + L-serine. It participates in one-carbon metabolism; tetrahydrofolate interconversion. It functions in the pathway amino-acid biosynthesis; glycine biosynthesis; glycine from L-serine: step 1/1. Its function is as follows. Catalyzes the reversible interconversion of serine and glycine with tetrahydrofolate (THF) serving as the one-carbon carrier. Appears to be specific for THF as the pteridine substrate, since the use of tetrahydromethanopterin (H4MPT) is much less efficient. Also exhibits THF-independent aldolase activity toward beta-hydroxyamino acids, producing glycine and aldehydes, via a retro-aldol mechanism. Thus, is able to catalyze the cleavage of L-allo-threonine and L-threo-beta-phenylserine. In Methanosarcina barkeri (strain Fusaro / DSM 804), this protein is Serine hydroxymethyltransferase.